Here is a 419-residue protein sequence, read N- to C-terminus: AT-rich binding protein (419 aa).

The segment at 29-52 adopts a C2H2-type 1 zinc-finger fold; sequence IVCHTCQEELQTQDAFWKHIQDEH. The segment at 121–179 is disordered; sequence LHEAQHQQQQQQQQHQQQQQQQQHQQQQQHQHHQHQQQQQHLHQQQQQQQQQQRDAAKE. Low complexity-rich tracts occupy residues 126-149 and 156-173; these read HQQQ…QQQQ and QQQQ…QQQQ. 2 C2H2-type zinc fingers span residues 352-376 and 382-405; these read YVCD…RVVH and FNCD…KKKH.

It localises to the nucleus. Its function is as follows. May be a transcription factor for genes having (A+T) stretches in their promoter and/or enhancer regions. Binds to AT rich DNA. The polypeptide is AT-rich binding protein (Drosophila grimshawi (Hawaiian fruit fly)).